The sequence spans 202 residues: ATP-dependent Clp protease proteolytic subunit 2 (202 aa).

Serine 99 serves as the catalytic Nucleophile. The active site involves histidine 124.

Belongs to the peptidase S14 family. In terms of assembly, fourteen ClpP subunits assemble into 2 heptameric rings which stack back to back to give a disk-like structure with a central cavity, resembling the structure of eukaryotic proteasomes.

The protein localises to the cytoplasm. It catalyses the reaction Hydrolysis of proteins to small peptides in the presence of ATP and magnesium. alpha-casein is the usual test substrate. In the absence of ATP, only oligopeptides shorter than five residues are hydrolyzed (such as succinyl-Leu-Tyr-|-NHMec, and Leu-Tyr-Leu-|-Tyr-Trp, in which cleavage of the -Tyr-|-Leu- and -Tyr-|-Trp bonds also occurs).. Functionally, cleaves peptides in various proteins in a process that requires ATP hydrolysis. Has a chymotrypsin-like activity. Plays a major role in the degradation of misfolded proteins. The chain is ATP-dependent Clp protease proteolytic subunit 2 from Desulfitobacterium hafniense (strain Y51).